Here is a 382-residue protein sequence, read N- to C-terminus: Carbamoyl phosphate synthase small chain (382 aa).

The segment at 1 to 189 (MIKSALLVLE…GLPEAKSEDD (189 aa)) is CPSase. L-glutamine contacts are provided by serine 47 and glycine 241. Residues 193–380 (HVVAYDFGAK…IELIKHYRSS (188 aa)) form the Glutamine amidotransferase type-1 domain. Cysteine 269 acts as the Nucleophile in catalysis. L-glutamine contacts are provided by leucine 270, glutamine 273, asparagine 311, glycine 313, and phenylalanine 314. Active-site residues include histidine 353 and glutamate 355.

The protein belongs to the CarA family. Composed of two chains; the small (or glutamine) chain promotes the hydrolysis of glutamine to ammonia, which is used by the large (or ammonia) chain to synthesize carbamoyl phosphate. Tetramer of heterodimers (alpha,beta)4.

The enzyme catalyses hydrogencarbonate + L-glutamine + 2 ATP + H2O = carbamoyl phosphate + L-glutamate + 2 ADP + phosphate + 2 H(+). The catalysed reaction is L-glutamine + H2O = L-glutamate + NH4(+). The protein operates within amino-acid biosynthesis; L-arginine biosynthesis; carbamoyl phosphate from bicarbonate: step 1/1. It participates in pyrimidine metabolism; UMP biosynthesis via de novo pathway; (S)-dihydroorotate from bicarbonate: step 1/3. Small subunit of the glutamine-dependent carbamoyl phosphate synthetase (CPSase). CPSase catalyzes the formation of carbamoyl phosphate from the ammonia moiety of glutamine, carbonate, and phosphate donated by ATP, constituting the first step of 2 biosynthetic pathways, one leading to arginine and/or urea and the other to pyrimidine nucleotides. The small subunit (glutamine amidotransferase) binds and cleaves glutamine to supply the large subunit with the substrate ammonia. The protein is Carbamoyl phosphate synthase small chain of Salmonella typhi.